The primary structure comprises 193 residues: Xanthine phosphoribosyltransferase (193 aa).

Positions 20 and 27 each coordinate xanthine. 127-131 contacts 5-phospho-alpha-D-ribose 1-diphosphate; the sequence is AYGNA. Xanthine is bound at residue Lys-155.

The protein belongs to the purine/pyrimidine phosphoribosyltransferase family. Xpt subfamily. Homodimer.

The protein localises to the cytoplasm. It carries out the reaction XMP + diphosphate = xanthine + 5-phospho-alpha-D-ribose 1-diphosphate. It participates in purine metabolism; XMP biosynthesis via salvage pathway; XMP from xanthine: step 1/1. In terms of biological role, converts the preformed base xanthine, a product of nucleic acid breakdown, to xanthosine 5'-monophosphate (XMP), so it can be reused for RNA or DNA synthesis. The sequence is that of Xanthine phosphoribosyltransferase from Porphyromonas gingivalis (strain ATCC BAA-308 / W83).